The following is a 278-amino-acid chain: Hydroxyethylthiazole kinase (278 aa).

A substrate-binding site is contributed by M51. R127 and S173 together coordinate ATP. G201 provides a ligand contact to substrate.

Belongs to the Thz kinase family. Requires Mg(2+) as cofactor.

It catalyses the reaction 5-(2-hydroxyethyl)-4-methylthiazole + ATP = 4-methyl-5-(2-phosphooxyethyl)-thiazole + ADP + H(+). It functions in the pathway cofactor biosynthesis; thiamine diphosphate biosynthesis; 4-methyl-5-(2-phosphoethyl)-thiazole from 5-(2-hydroxyethyl)-4-methylthiazole: step 1/1. Its function is as follows. Catalyzes the phosphorylation of the hydroxyl group of 4-methyl-5-beta-hydroxyethylthiazole (THZ). The protein is Hydroxyethylthiazole kinase of Leptothrix cholodnii (strain ATCC 51168 / LMG 8142 / SP-6) (Leptothrix discophora (strain SP-6)).